A 316-amino-acid polypeptide reads, in one-letter code: Probable 5-dehydro-4-deoxyglucarate dehydratase 1 (316 aa).

Belongs to the DapA family.

The catalysed reaction is 5-dehydro-4-deoxy-D-glucarate + H(+) = 2,5-dioxopentanoate + CO2 + H2O. The protein operates within carbohydrate acid metabolism; D-glucarate degradation; 2,5-dioxopentanoate from D-glucarate: step 2/2. This chain is Probable 5-dehydro-4-deoxyglucarate dehydratase 1, found in Streptomyces coelicolor (strain ATCC BAA-471 / A3(2) / M145).